The primary structure comprises 549 residues: Undecaprenyl phosphate-alpha-4-amino-4-deoxy-L-arabinose arabinosyl transferase (549 aa).

The next 12 helical transmembrane spans lie at 9–29, 80–100, 112–132, 136–156, 166–186, 204–224, 256–276, 288–308, 312–332, 346–366, 376–396, and 402–422; these read LLLIAFGLFYLVPLSNHGLWI, LFGVRIASVVATALSVLLAYL, SLACALLYASFGLIAGQSGYA, PQFTFWVNLSLVALWYALDAG, ILLGLACGMGFLTKGFLAWLL, LLGYGALAVLAALLVCLPWAL, PWWFYLPLLVVACLPWSGLLP, QAPVVFLALWLLLPLAFFSLS, LPTYIMPCLLPLALLMGHALV, NGLLNLGLALLALAALAYLQL, FELFLVLLVIGAWAAAGLAQW, and AWAAPLLASWVLIALLPAAMP.

Belongs to the glycosyltransferase 83 family.

The protein localises to the cell inner membrane. It catalyses the reaction 4-amino-4-deoxy-alpha-L-arabinopyranosyl di-trans,octa-cis-undecaprenyl phosphate + lipid IVA = lipid IIA + di-trans,octa-cis-undecaprenyl phosphate.. It functions in the pathway lipopolysaccharide metabolism; 4-amino-4-deoxy-beta-L-arabinose-lipid A biosynthesis. Catalyzes the transfer of the L-Ara4N moiety of the glycolipid undecaprenyl phosphate-alpha-L-Ara4N to lipid A. The modified arabinose is attached to lipid A and is required for resistance to polymyxin and cationic antimicrobial peptides. The protein is Undecaprenyl phosphate-alpha-4-amino-4-deoxy-L-arabinose arabinosyl transferase of Pseudomonas aeruginosa (strain UCBPP-PA14).